Consider the following 757-residue polypeptide: Zinc finger CCCH domain-containing protein 5 (757 aa).

Positions 1-127 (MEQANEKEEE…REEEERRWKD (127 aa)) are disordered. Basic and acidic residues predominate over residues 13–35 (HEEAAGEKESFEESKEKAAEMSR). A compositionally biased stretch (basic residues) spans 36 to 50 (KEKRKAMKKLKRKQV). A compositionally biased stretch (basic and acidic residues) spans 51-127 (RKEIAAKERE…REEEERRWKD (77 aa)). Residues 240–268 (EQDKAHCPFHLKTGACRFGQRCSRVHFYP) form a C3H1-type 1 zinc finger. The RRM domain maps to 295–372 (YTDEEAELCY…KQVNCEFVNI (78 aa)). A C3H1-type 2 zinc finger spans residues 374 to 404 (RWKVAICGEYMKSRLKTCSRGSACNFIHCFR). Residues 441 to 757 (HESSGSLNDS…EEEIERWRPV (317 aa)) form a disordered region. Positions 444 to 455 (SGSLNDSISDLS) are enriched in polar residues. Residues 487–546 (YHGDTQDSTREDKLRRHAENCHDGDDSPSRDGSLEREMYKERRYAKDTLHRDSRWSEHSP) are compositionally biased toward basic and acidic residues. Composition is skewed to basic residues over residues 547-557 (GHRVGRKRIHG) and 600-609 (KTHRSSRKHS). 3 stretches are compositionally biased toward basic and acidic residues: residues 610–634 (REGSSADKEEGHEHDRVHTVSDKSH), 644–672 (RSSSRYSHEEDSTESRHHQHKESDKKRSV), and 681–721 (SDKD…ETHK). Residues 722 to 733 (ERRHRHRKRRRT) show a composition bias toward basic residues.

The sequence is that of Zinc finger CCCH domain-containing protein 5 from Arabidopsis thaliana (Mouse-ear cress).